A 274-amino-acid chain; its full sequence is 2-dehydro-3-deoxyphosphooctonate aldolase (274 aa).

Belongs to the KdsA family.

The protein localises to the cytoplasm. The enzyme catalyses D-arabinose 5-phosphate + phosphoenolpyruvate + H2O = 3-deoxy-alpha-D-manno-2-octulosonate-8-phosphate + phosphate. It participates in carbohydrate biosynthesis; 3-deoxy-D-manno-octulosonate biosynthesis; 3-deoxy-D-manno-octulosonate from D-ribulose 5-phosphate: step 2/3. Its pathway is bacterial outer membrane biogenesis; lipopolysaccharide biosynthesis. This is 2-dehydro-3-deoxyphosphooctonate aldolase from Rickettsia peacockii (strain Rustic).